The primary structure comprises 373 residues: Indole glucosinolate O-methyltransferase 4 (373 aa).

G217, D240, D260, M261, and K274 together coordinate S-adenosyl-L-homocysteine. Catalysis depends on H278, which acts as the Proton acceptor.

The protein belongs to the class I-like SAM-binding methyltransferase superfamily. Cation-independent O-methyltransferase family. In terms of assembly, interacts with B'GAMMA.

It participates in secondary metabolite biosynthesis. In terms of biological role, involved in indole glucosinolate biosynthesis. Catalyzes methoxylation reactions of the glucosinolate indole ring. Converts the hydroxy intermediates 4-hydroxy-indol-3-yl-methylglucosinolate (4OH-I3M) and 1-hydroxy-indol-3-yl-methylglucosinolate (1OH-I3M) to 4-methoxy-indol-3-yl-methylglucosinolate (4MO-I3M) and 1-methoxy-indol-3-yl-methylglucosinolate(1MO-I3M), respectively. This Arabidopsis thaliana (Mouse-ear cress) protein is Indole glucosinolate O-methyltransferase 4.